The chain runs to 229 residues: UPF0758 protein Fjoh_0413 (229 aa).

Residues 107–229 (KITSSKDAFT…YYSFVDEGIF (123 aa)) form the MPN domain. Positions 178, 180, and 191 each coordinate Zn(2+). The JAMM motif motif lies at 178 to 191 (HNHPSGELNPSQAD).

Belongs to the UPF0758 family.

This is UPF0758 protein Fjoh_0413 from Flavobacterium johnsoniae (strain ATCC 17061 / DSM 2064 / JCM 8514 / BCRC 14874 / CCUG 350202 / NBRC 14942 / NCIMB 11054 / UW101) (Cytophaga johnsonae).